A 348-amino-acid polypeptide reads, in one-letter code: GTPase Obg 1 (348 aa).

The Obg domain occupies 1–159; it reads MSFVDEAKIH…HCVLLKLKIV (159 aa). Positions 160 to 329 constitute an OBG-type G domain; the sequence is SDVGIIGMPN…LHAQVKKAVV (170 aa). GTP is bound by residues 166–173, 191–195, 212–215, 279–282, and 310–312; these read GMPNAGKS, FTTLE, DIPG, NKCD, and GDE. Mg(2+) contacts are provided by S173 and T193.

The protein belongs to the TRAFAC class OBG-HflX-like GTPase superfamily. OBG GTPase family. As to quaternary structure, monomer. Requires Mg(2+) as cofactor.

It localises to the cytoplasm. An essential GTPase which binds GTP, GDP and possibly (p)ppGpp with moderate affinity, with high nucleotide exchange rates and a fairly low GTP hydrolysis rate. Plays a role in control of the cell cycle, stress response, ribosome biogenesis and in those bacteria that undergo differentiation, in morphogenesis control. This Anaplasma marginale (strain Florida) protein is GTPase Obg 1.